Reading from the N-terminus, the 150-residue chain is Large ribosomal subunit protein bL9 (150 aa).

The protein belongs to the bacterial ribosomal protein bL9 family.

Its function is as follows. Binds to the 23S rRNA. This Streptococcus pyogenes serotype M18 (strain MGAS8232) protein is Large ribosomal subunit protein bL9.